We begin with the raw amino-acid sequence, 199 residues long: Potassium-transporting ATPase KdpC subunit (199 aa).

A helical membrane pass occupies residues 21-43 (LALLFVCGVVYTGTVTQLGGALF).

This sequence belongs to the KdpC family. In terms of assembly, the system is composed of three essential subunits: KdpA, KdpB and KdpC.

The protein localises to the cell inner membrane. Functionally, part of the high-affinity ATP-driven potassium transport (or Kdp) system, which catalyzes the hydrolysis of ATP coupled with the electrogenic transport of potassium into the cytoplasm. This subunit acts as a catalytic chaperone that increases the ATP-binding affinity of the ATP-hydrolyzing subunit KdpB by the formation of a transient KdpB/KdpC/ATP ternary complex. This Shewanella putrefaciens (strain CN-32 / ATCC BAA-453) protein is Potassium-transporting ATPase KdpC subunit.